A 128-amino-acid polypeptide reads, in one-letter code: Transcription antitermination protein NusB (128 aa).

Belongs to the NusB family.

Involved in transcription antitermination. Required for transcription of ribosomal RNA (rRNA) genes. Binds specifically to the boxA antiterminator sequence of the ribosomal RNA (rrn) operons. The sequence is that of Transcription antitermination protein NusB from Listeria monocytogenes serotype 4b (strain CLIP80459).